The chain runs to 531 residues: Peptide chain release factor 3 (531 aa).

Residues 10–278 (RRRRTFAIIS…SLIDWAPAPK (269 aa)) form the tr-type G domain. GTP contacts are provided by residues 19–26 (SHPDAGKT), 87–91 (DTPGH), and 141–144 (NKYD).

This sequence belongs to the TRAFAC class translation factor GTPase superfamily. Classic translation factor GTPase family. PrfC subfamily.

Its subcellular location is the cytoplasm. Its function is as follows. Increases the formation of ribosomal termination complexes and stimulates activities of RF-1 and RF-2. It binds guanine nucleotides and has strong preference for UGA stop codons. It may interact directly with the ribosome. The stimulation of RF-1 and RF-2 is significantly reduced by GTP and GDP, but not by GMP. In Neisseria meningitidis serogroup B (strain ATCC BAA-335 / MC58), this protein is Peptide chain release factor 3.